A 324-amino-acid polypeptide reads, in one-letter code: MNSEVERPSFLSLPDEIILSCLARISRSYYPKLSLVCKTFRTLLISNELIVARLHLKTHETFCHVCLKFPDKPNPSMFTLWIKPGTILTNQLEKNKRSTRDTRLVQIPSSYYYNVPFYLVMVGSEVYGLSQRNDPSSNMFVRNKGDIFLCKAPNMTVARAKASAVVFNGKIYVMGGCMADESVNWGEVFDIKTQTWEALPDPGPEFRFSSIRKIDVFQEKLYVRSNEKKDSVYDPKEEWRVVKGLDMLNRNLGCGTIEIVHYGGKLLILWDKVDLSHDKDIWCAVIALEKRHGSDEVWGNIEWADIVLTVPSSYVFVNSLETGF.

The region spanning 7–54 is the F-box domain; the sequence is RPSFLSLPDEIILSCLARISRSYYPKLSLVCKTFRTLLISNELIVARL. A Kelch repeat occupies 170–216; the sequence is KIYVMGGCMADESVNWGEVFDIKTQTWEALPDPGPEFRFSSIRKIDV.

The chain is Putative F-box/kelch-repeat protein At5g28160 from Arabidopsis thaliana (Mouse-ear cress).